The sequence spans 148 residues: uncharacterized protein (148 aa).

The span at 97 to 112 (KKLDEQRMPGKPKNTE) shows a compositional bias: basic and acidic residues. The disordered stretch occupies residues 97–126 (KKLDEQRMPGKPKNTEGSKSTIRKKANVGN).

This is an uncharacterized protein from Caenorhabditis elegans.